Consider the following 127-residue polypeptide: uncharacterized protein (127 aa).

Positions phenylalanine 71–lysine 126 form a coiled coil.

This is an uncharacterized protein from Aquifex aeolicus (strain VF5).